The primary structure comprises 290 residues: Probable ATP-dependent kinase TDA10 (290 aa).

ATP is bound at residue 38–45 (GPQGSGKS).

Belongs to the GLYK kinase family.

It is found in the cytoplasm. The protein localises to the nucleus. In terms of biological role, ATP-dependent kinase whose specificity is not yet known. The sequence is that of Probable ATP-dependent kinase TDA10 (TDA10) from Saccharomyces cerevisiae (strain ATCC 204508 / S288c) (Baker's yeast).